The chain runs to 134 residues: S-protein homolog 18 (134 aa).

Residues 1–25 (MCPSSFRLILSVILIAFLFVGLCEA) form the signal peptide. The N-linked (GlcNAc...) asparagine glycan is linked to asparagine 87.

The protein belongs to the plant self-incompatibility (S1) protein family.

It is found in the secreted. This Arabidopsis thaliana (Mouse-ear cress) protein is S-protein homolog 18.